The chain runs to 251 residues: NADPH-dependent oxidoreductase (251 aa).

The protein belongs to the flavin oxidoreductase frp family. It depends on FMN as a cofactor.

Functionally, reduces FMN, organic nitro compounds and disulfide DTNB. Involved in maintenance of the cellular redox state and the disulfide stress response. In Staphylococcus aureus (strain bovine RF122 / ET3-1), this protein is NADPH-dependent oxidoreductase (nfrA).